The primary structure comprises 245 residues: Eukaryotic translation initiation factor 3 subunit K (245 aa).

The PCI domain maps to 46 to 227 (YDCYANLALL…EAKGTVVREN (182 aa)).

This sequence belongs to the eIF-3 subunit K family. Component of the eukaryotic translation initiation factor 3 (eIF-3) complex.

It localises to the cytoplasm. Functionally, component of the eukaryotic translation initiation factor 3 (eIF-3) complex, which is involved in protein synthesis of a specialized repertoire of mRNAs and, together with other initiation factors, stimulates binding of mRNA and methionyl-tRNAi to the 40S ribosome. The eIF-3 complex specifically targets and initiates translation of a subset of mRNAs involved in cell proliferation. This is Eukaryotic translation initiation factor 3 subunit K from Phaeosphaeria nodorum (strain SN15 / ATCC MYA-4574 / FGSC 10173) (Glume blotch fungus).